A 408-amino-acid polypeptide reads, in one-letter code: S-adenosylmethionine synthase (408 aa).

ATP is bound at residue His-19. Asp-21 contributes to the Mg(2+) binding site. Glu-47 provides a ligand contact to K(+). Residues Glu-60 and Gln-104 each coordinate L-methionine. The segment at Gln-104–His-114 is flexible loop. ATP-binding positions include Asp-185–Lys-187, Arg-255–Phe-256, Asp-264, Arg-270–Lys-271, Ala-287, and Lys-291. Asp-264 lines the L-methionine pocket. Lys-295 serves as a coordination point for L-methionine.

This sequence belongs to the AdoMet synthase family. As to quaternary structure, homotetramer; dimer of dimers. Mg(2+) is required as a cofactor. It depends on K(+) as a cofactor.

Its subcellular location is the cytoplasm. The catalysed reaction is L-methionine + ATP + H2O = S-adenosyl-L-methionine + phosphate + diphosphate. It participates in amino-acid biosynthesis; S-adenosyl-L-methionine biosynthesis; S-adenosyl-L-methionine from L-methionine: step 1/1. Functionally, catalyzes the formation of S-adenosylmethionine (AdoMet) from methionine and ATP. The overall synthetic reaction is composed of two sequential steps, AdoMet formation and the subsequent tripolyphosphate hydrolysis which occurs prior to release of AdoMet from the enzyme. In Deinococcus radiodurans (strain ATCC 13939 / DSM 20539 / JCM 16871 / CCUG 27074 / LMG 4051 / NBRC 15346 / NCIMB 9279 / VKM B-1422 / R1), this protein is S-adenosylmethionine synthase.